Consider the following 195-residue polypeptide: Peptidyl-tRNA hydrolase (195 aa).

Tyrosine 18 contacts tRNA. The active-site Proton acceptor is the histidine 23. TRNA-binding residues include tyrosine 69, asparagine 71, and asparagine 117.

The protein belongs to the PTH family. Monomer.

It localises to the cytoplasm. It catalyses the reaction an N-acyl-L-alpha-aminoacyl-tRNA + H2O = an N-acyl-L-amino acid + a tRNA + H(+). In terms of biological role, hydrolyzes ribosome-free peptidyl-tRNAs (with 1 or more amino acids incorporated), which drop off the ribosome during protein synthesis, or as a result of ribosome stalling. Catalyzes the release of premature peptidyl moieties from peptidyl-tRNA molecules trapped in stalled 50S ribosomal subunits, and thus maintains levels of free tRNAs and 50S ribosomes. This is Peptidyl-tRNA hydrolase from Nitrosomonas eutropha (strain DSM 101675 / C91 / Nm57).